Consider the following 317-residue polypeptide: GTP cyclohydrolase MptA (317 aa).

The protein belongs to the GTP cyclohydrolase IV family. As to quaternary structure, homodimer. Requires Fe(2+) as cofactor.

The enzyme catalyses GTP + H2O = 7,8-dihydroneopterin 2',3'-cyclic phosphate + formate + diphosphate + H(+). It functions in the pathway cofactor biosynthesis; 5,6,7,8-tetrahydromethanopterin biosynthesis. Converts GTP to 7,8-dihydro-D-neopterin 2',3'-cyclic phosphate, the first intermediate in the biosynthesis of coenzyme methanopterin. In Methanococcoides burtonii (strain DSM 6242 / NBRC 107633 / OCM 468 / ACE-M), this protein is GTP cyclohydrolase MptA.